The chain runs to 151 residues: Large ribosomal subunit protein eL19 (151 aa).

Basic residues predominate over residues 57–81 (KKGISSARVKKLKEQRKKGRRRGPG). Residues 57 to 95 (KKGISSARVKKLKEQRKKGRRRGPGSRRGAAGARTPPKE) form a disordered region.

Belongs to the eukaryotic ribosomal protein eL19 family. Part of the 50S ribosomal subunit.

Binds to the 23S rRNA. In Methanocaldococcus jannaschii (strain ATCC 43067 / DSM 2661 / JAL-1 / JCM 10045 / NBRC 100440) (Methanococcus jannaschii), this protein is Large ribosomal subunit protein eL19.